The chain runs to 75 residues: Bacteriocin lactococcin-A (75 aa).

Residues 1-21 (MKNQLNFNIVSDEELSEANGG) constitute a propeptide that is removed on maturation. The helical transmembrane segment at 30-52 (AAGDLYYNTNTHKYVYQQTQNAF) threads the bilayer.

The protein resides in the secreted. The protein localises to the host cell membrane. Kills Lactococci. This is Bacteriocin lactococcin-A (lcnA) from Lactococcus lactis subsp. cremoris (Streptococcus cremoris).